The following is a 159-amino-acid chain: Endoribonuclease YbeY (159 aa).

Zn(2+) contacts are provided by H122, H126, and H132.

The protein belongs to the endoribonuclease YbeY family. It depends on Zn(2+) as a cofactor.

The protein resides in the cytoplasm. Functionally, single strand-specific metallo-endoribonuclease involved in late-stage 70S ribosome quality control and in maturation of the 3' terminus of the 16S rRNA. This is Endoribonuclease YbeY from Roseiflexus castenholzii (strain DSM 13941 / HLO8).